The primary structure comprises 26 residues: Superoxide dismutase [Cu-Zn] (26 aa).

The S-palmitoyl cysteine moiety is linked to residue cysteine 7.

The protein belongs to the Cu-Zn superoxide dismutase family. As to quaternary structure, homotrimer. Cu cation serves as cofactor. The cofactor is Zn(2+).

Its subcellular location is the cytoplasm. It is found in the nucleus. The catalysed reaction is 2 superoxide + 2 H(+) = H2O2 + O2. Destroys radicals which are normally produced within the cells and which are toxic to biological systems. The polypeptide is Superoxide dismutase [Cu-Zn] (sod1) (Paralichthys olivaceus (Bastard halibut)).